Reading from the N-terminus, the 239-residue chain is 4-hydroxy-tetrahydrodipicolinate reductase (239 aa).

NAD(+) is bound by residues 12–17, 94–96, and 118–121; these read GASGRM, GTT, and ASNF. His150 acts as the Proton donor/acceptor in catalysis. His151 lines the (S)-2,3,4,5-tetrahydrodipicolinate pocket. Lys154 (proton donor) is an active-site residue. Position 160-161 (160-161) interacts with (S)-2,3,4,5-tetrahydrodipicolinate; sequence GT.

The protein belongs to the DapB family.

The protein localises to the cytoplasm. It carries out the reaction (S)-2,3,4,5-tetrahydrodipicolinate + NAD(+) + H2O = (2S,4S)-4-hydroxy-2,3,4,5-tetrahydrodipicolinate + NADH + H(+). The enzyme catalyses (S)-2,3,4,5-tetrahydrodipicolinate + NADP(+) + H2O = (2S,4S)-4-hydroxy-2,3,4,5-tetrahydrodipicolinate + NADPH + H(+). It participates in amino-acid biosynthesis; L-lysine biosynthesis via DAP pathway; (S)-tetrahydrodipicolinate from L-aspartate: step 4/4. Its function is as follows. Catalyzes the conversion of 4-hydroxy-tetrahydrodipicolinate (HTPA) to tetrahydrodipicolinate. This is 4-hydroxy-tetrahydrodipicolinate reductase from Stenotrophomonas maltophilia (strain R551-3).